The primary structure comprises 340 residues: Guanine nucleotide-binding protein G(I)/G(S)/G(T) subunit beta-1 (340 aa).

WD repeat units follow at residues 53 to 83 (GHLAKIYAMHWGSDSRNLVSASQDGKLIVWD), 95 to 125 (LRSSWVMTCAYAPSGSYVACGGLDNICSIYS), 141 to 170 (GHTGYLSCCRFVDDNQIVTSSGDMTCALWD), 182 to 212 (GHTGDVMSLSLSPNMRTFTSGACDASAKLWD), 224 to 254 (GHESDINAVTFFPNGHAFATGSDDATCRLFD), 268 to 298 (NIICGITSVAFSKSGKLLLAGYDDFNCNVWD), and 310 to 340 (GHDNRVSCLGVTEDGMAVATGSWDSFLKIWN).

It belongs to the WD repeat G protein beta family. In terms of assembly, g proteins are composed of 3 units, alpha, beta and gamma.

Its function is as follows. Guanine nucleotide-binding proteins (G proteins) are involved as a modulator or transducer in various transmembrane signaling systems. The beta and gamma chains are required for the GTPase activity, for replacement of GDP by GTP, and for G protein-effector interaction. In Homarus americanus (American lobster), this protein is Guanine nucleotide-binding protein G(I)/G(S)/G(T) subunit beta-1 (GBETA1).